The chain runs to 225 residues: MHAIVAVKSLRSAKSRLAGELDADARADLVLAMLHDTLATVAAVSAIDTVTVVTPDPTVAALAYSVGVTVYADPAPHISLTNGASPRAEETLNAALSAAAADIRAKRGVVDLVVLQADLPAMQPSELTEAVAAARSGGRSVVVDHHGTGTSALFACGESALDPRFGPESARGHANSGARPLNGQWPGLRTDVDTHADLDTVRALGVGPATLASLTRLKATPSNSR.

Thr150, Gly166, and Ser169 together coordinate phosphoenolpyruvate. A disordered region spans residues 167–186; that stretch reads PESARGHANSGARPLNGQWP.

Belongs to the CofC family.

It catalyses the reaction phosphoenolpyruvate + GTP + H(+) = enolpyruvoyl-2-diphospho-5'-guanosine + diphosphate. It participates in cofactor biosynthesis; coenzyme F420 biosynthesis. Its function is as follows. Guanylyltransferase that catalyzes the activation of phosphoenolpyruvate (PEP) as enolpyruvoyl-2-diphospho-5'-guanosine, via the condensation of PEP with GTP. It is involved in the biosynthesis of coenzyme F420, a hydride carrier cofactor. This Rhodococcus erythropolis (strain PR4 / NBRC 100887) protein is Phosphoenolpyruvate guanylyltransferase.